Here is a 275-residue protein sequence, read N- to C-terminus: Putative rhamnulose-1-phosphate aldolase (275 aa).

Glutamate 117 is an active-site residue. Zn(2+)-binding residues include histidine 141, histidine 143, and histidine 212.

Belongs to the aldolase class II family. RhaD subfamily. As to quaternary structure, homotetramer. Requires Zn(2+) as cofactor.

Its subcellular location is the cytoplasm. It catalyses the reaction L-rhamnulose 1-phosphate = (S)-lactaldehyde + dihydroxyacetone phosphate. It participates in carbohydrate degradation; L-rhamnose degradation; glycerone phosphate from L-rhamnose: step 3/3. Functionally, catalyzes the reversible cleavage of L-rhamnulose-1-phosphate to dihydroxyacetone phosphate (DHAP) and L-lactaldehyde. This chain is Putative rhamnulose-1-phosphate aldolase, found in Salmonella typhi.